Here is a 292-residue protein sequence, read N- to C-terminus: Syntaxin-19 (292 aa).

Residues 1–24 are compositionally biased toward basic and acidic residues; that stretch reads MKDRLPELKQRTKETELSKDKDVP. A disordered region spans residues 1-28; sequence MKDRLPELKQRTKETELSKDKDVPTTEA. Residues 46 to 122 are a coiled coil; that stretch reads VAERHLHEIQ…VKEVKKSEDE (77 aa). Residues 209 to 271 enclose the t-SNARE coiled-coil homology domain; sequence LSEIEQRHKE…NTTKEKFGLA (63 aa).

It belongs to the syntaxin family. In terms of assembly, interacts with EGFR.

The protein localises to the cell membrane. The protein resides in the cytoplasm. Functionally, plays a role in endosomal trafficking of the epidermal growth factor receptor (EGFR). This chain is Syntaxin-19 (STX19), found in Bos taurus (Bovine).